Consider the following 155-residue polypeptide: Microsomal glutathione S-transferase 1 (155 aa).

Over 3 to 9 (DLKQLMD) the chain is Lumenal. Residues 10-33 (NEVLMAFTSYATIILAKMMFLSSA) traverse the membrane as a helical segment. Over 34 to 62 (TAFQRLTNKVFANPEDCAGFGKGENAKKF) the chain is Cytoplasmic. Residue arginine 38 coordinates glutathione. Lysine 42, lysine 55, and lysine 60 each carry N6-acetyllysine. The chain crosses the membrane as a helical span at residues 63–96 (LRTDEKVERVRRAHLNDLENIVPFLGIGLLYSLS). Residues arginine 73, arginine 74, histidine 76, and glutamate 81 each coordinate glutathione. Tyrosine 93 is modified (3'-nitrotyrosine; in vitro). At 97–99 (GPD) the chain is on the lumenal side. The chain crosses the membrane as a helical span at residues 100–123 (LSTALIHFRIFVGARIYHTIAYLT). Residue tyrosine 121 coordinates glutathione. Residues 124-128 (PLPQP) are Cytoplasmic-facing. A helical membrane pass occupies residues 129 to 148 (NRGLAFFVGYGVTLSMAYRL). The Lumenal segment spans residues 149–155 (LRSRLYL).

This sequence belongs to the MAPEG family. Homotrimer; The trimer binds only one molecule of glutathione. Post-translationally, in vitro, peroxynitrite induces nitration at Tyr-93 which activates the enzyme. As to expression, highest in the liver, followed by kidney and testis and much lower in seminal vesicles, spleen, lung and brain.

It is found in the endoplasmic reticulum membrane. The protein resides in the mitochondrion outer membrane. It carries out the reaction RX + glutathione = an S-substituted glutathione + a halide anion + H(+). With respect to regulation, in vitro, can be activated by reagents that attack Cys-50 sulfhydryl, such as N-ethylmaleimide and via nitration of Tyr-93 by peroxynitrite. Conjugation of reduced glutathione to a wide number of exogenous and endogenous hydrophobic electrophiles. The polypeptide is Microsomal glutathione S-transferase 1 (Mgst1) (Rattus norvegicus (Rat)).